Consider the following 83-residue polypeptide: uncharacterized protein (83 aa).

This is an uncharacterized protein from Bacillus anthracis.